The chain runs to 203 residues: Putative 3-methyladenine DNA glycosylase (203 aa).

Belongs to the DNA glycosylase MPG family.

In Mycobacterium tuberculosis (strain ATCC 25177 / H37Ra), this protein is Putative 3-methyladenine DNA glycosylase.